Here is a 140-residue protein sequence, read N- to C-terminus: Midkine (140 aa).

The signal sequence occupies residues 1 to 22 (MQHRGFFLLALLALLVVTSAVA). Cystine bridges form between Cys34/Cys58, Cys42/Cys67, Cys49/Cys71, Cys81/Cys113, and Cys91/Cys123.

It belongs to the pleiotrophin family. As to quaternary structure, homodimer. Interacts with ALK. Interacts with LRP1; promotes neuronal survival. Interacts with LRP2. Interacts with NCAM1. Interacts (via C-terminal) with PTPRZ1 (via chondroitin sulfate chains); this interaction is inhibited by PTN; this interaction promotes neuronal migration. Interacts with NCL; this interaction promotes NCL clustering and lateral movements of this complex into lipid rafts leading to MDK internalization. Interacts with LRP6 and LRP8: this interaction is calcium dependent. Interacts with ITGA4. Interacts with ITGA6. Interacts with ITGB1. Interacts with ITGA4:ITGB1 complex; this interaction mediates MDK-induced osteoblast cells migration through PXN phosphorylation. Interacts with ITGA6:ITGB1 complex; this interaction mediates MDK-induced neurite outgrowth. Interacts with NOTCH2; this interactio mediates a nuclear accumulation of NOTCH2 and therefore activation of NOTCH2 signaling leading to interaction between HES1 and STAT3. Interacts with GPC2 (via heparan sulfate chain); this interaction is inhibited by heparin followed by chondroitin sulfate E; this interaction induces GPC2 clustering through heparan sulfate chain; this interaction induces neuronal cell adhesion and neurite outgrowth. Interacts with SDC3; this interaction induces SDC3 clustering; this interaction induces neuronal cell adhesion and neurite outgrowth. Interacts with SDC1. Interacts with CSPG5; this interaction promotes elongation of oligodendroglial precursor-like cells. In terms of tissue distribution, expressed in the follicular epithelium and granulosa cells of the ovary.

It is found in the secreted. Functionally, secreted protein that functions as a cytokine and growth factor and mediates its signal through cell-surface proteoglycan and non-proteoglycan receptors. Binds cell-surface proteoglycan receptors via their chondroitin sulfate (CS) groups. Thereby regulates many processes like inflammatory response, cell proliferation, cell adhesion, cell growth, cell survival, tissue regeneration, cell differentiation and cell migration. Participates in inflammatory processes by exerting two different activities. Firstly, mediates neutrophils and macrophages recruitment to the sites of inflammation both by direct action by cooperating namely with ITGB2 via LRP1 and by inducing chemokine expression. This inflammation can be accompanied by epithelial cell survival and smooth muscle cell migration after renal and vessel damage, respectively. Secondly, suppresses the development of tolerogenic dendric cells thereby inhibiting the differentiation of regulatory T cells and also promote T cell expansion through NFAT signaling and Th1 cell differentiation. Promotes tissue regeneration after injury or trauma. After heart damage negatively regulates the recruitment of inflammatory cells and mediates cell survival through activation of anti-apoptotic signaling pathways via MAPKs and AKT pathways through the activation of angiogenesis. Also facilitates liver regeneration as well as bone repair by recruiting macrophage at trauma site and by promoting cartilage development by facilitating chondrocyte differentiation. Plays a role in brain by promoting neural precursor cells survival and growth through interaction with heparan sulfate proteoglycans. Binds PTPRZ1 and promotes neuronal migration and embryonic neurons survival. Binds SDC3 or GPC2 and mediates neurite outgrowth and cell adhesion. Binds chondroitin sulfate E and heparin leading to inhibition of neuronal cell adhesion induced by binding with GPC2. Binds CSPG5 and promotes elongation of oligodendroglial precursor-like cells. Also binds ITGA6:ITGB1 complex; this interaction mediates MDK-induced neurite outgrowth. Binds LRP1; promotes neuronal survival. Binds ITGA4:ITGB1 complex; this interaction mediates MDK-induced osteoblast cells migration through PXN phosphorylation. Binds anaplastic lymphoma kinase (ALK) which induces ALK activation and subsequent phosphorylation of the insulin receptor substrate (IRS1), followed by the activation of mitogen-activated protein kinase (MAPK) and PI3-kinase, and the induction of cell proliferation. Promotes epithelial to mesenchymal transition through interaction with NOTCH2. During arteriogenesis, plays a role in vascular endothelial cell proliferation by inducing VEGFA expression and release which in turn induces nitric oxide synthase expression. Moreover activates vasodilation through nitric oxide synthase activation. Negatively regulates bone formation in response to mechanical load by inhibiting Wnt/beta-catenin signaling in osteoblasts. In addition plays a role in hippocampal development, working memory, auditory response, early fetal adrenal gland development and the female reproductive system. This Mus musculus (Mouse) protein is Midkine.